Here is a 222-residue protein sequence, read N- to C-terminus: MLKKENIIVLLSGGMDSAVLLWLSKTIFKDVYTISYSYGQKHSIELEYAKELSKIAGVKEHFIVEVPHLKQLKGSALTDENLEIPSENYPDEPPITTVPMRNLIFLSIAASFADVYEIENIGIGIHSLDSPYPDCRAEFASSAEAVINASSVMVAKKKNRIKIFTPFLGMSKTDIAKLGRELGVPFEKTYSCYKGTVPPCGECATCRQREEALRETFSDTTT.

An ATP-binding site is contributed by 11-21 (LSGGMDSAVLL). Residues Cys-192, Cys-200, Cys-203, and Cys-206 each contribute to the Zn(2+) site.

Belongs to the QueC family. Requires Zn(2+) as cofactor.

It carries out the reaction 7-carboxy-7-deazaguanine + NH4(+) + ATP = 7-cyano-7-deazaguanine + ADP + phosphate + H2O + H(+). The protein operates within purine metabolism; 7-cyano-7-deazaguanine biosynthesis. Functionally, catalyzes the ATP-dependent conversion of 7-carboxy-7-deazaguanine (CDG) to 7-cyano-7-deazaguanine (preQ(0)). The sequence is that of 7-cyano-7-deazaguanine synthase from Sulfurihydrogenibium sp. (strain YO3AOP1).